Here is a 318-residue protein sequence, read N- to C-terminus: Protein W (318 aa).

2 disordered regions span residues 1–23 (MDQD…GGRE) and 38–318 (SEPT…KKGA). The span at 7 to 20 (ILKEDSEVEREAPG) shows a compositional bias: basic and acidic residues. Polar residues predominate over residues 50-59 (LHNTINTPQG). S68 bears the Phosphoserine; by host mark. Positions 83-101 (RSGEESRVSGRTSKPEAEA) are enriched in basic and acidic residues. Residue S125 is modified to Phosphoserine; by host. Residues 150-168 (GIEDENREMAAHPDKRGED) are compositionally biased toward basic and acidic residues. The span at 191 to 206 (ASNNGRSMEPGSSHSA) shows a compositional bias: polar residues. Phosphoserine; by host is present on residues S192, S249, S257, and S260.

In Sendai virus (strain Harris) (SeV), this protein is Protein W (P/V/C).